The following is a 268-amino-acid chain: ClpXP adapter protein SpxH (268 aa).

Belongs to the SpxH family. In terms of assembly, interacts with Spx.

Its subcellular location is the cytoplasm. In terms of biological role, adapter protein required for efficient degradation of Spx by ClpXP under non-stress conditions. Interaction with Spx stabilizes Spx and exposes the C-terminus of Spx for recognition and proteolysis by ClpXP. This chain is ClpXP adapter protein SpxH, found in Staphylococcus aureus (strain MRSA252).